We begin with the raw amino-acid sequence, 133 residues long: MKTFPVSIVTPDGPVYEKEVEMVSVKAESGEMGILPGHIPTVAPLKISAVRLKNGGHTDYVAVSGGFIEVRPDKVTVLSSSAEEANHIDIHRANEAKRRAEQRMQDKQAHVDFKRAEMALQRAVNRLNVSDMK.

It belongs to the ATPase epsilon chain family. F-type ATPases have 2 components, CF(1) - the catalytic core - and CF(0) - the membrane proton channel. CF(1) has five subunits: alpha(3), beta(3), gamma(1), delta(1), epsilon(1). CF(0) has three main subunits: a, b and c.

It is found in the cell membrane. Produces ATP from ADP in the presence of a proton gradient across the membrane. The protein is ATP synthase epsilon chain of Bacillus anthracis (strain A0248).